We begin with the raw amino-acid sequence, 457 residues long: Argininosuccinate lyase (457 aa).

It belongs to the lyase 1 family. Argininosuccinate lyase subfamily.

The protein localises to the cytoplasm. The enzyme catalyses 2-(N(omega)-L-arginino)succinate = fumarate + L-arginine. It functions in the pathway amino-acid biosynthesis; L-arginine biosynthesis; L-arginine from L-ornithine and carbamoyl phosphate: step 3/3. This is Argininosuccinate lyase from Shigella sonnei (strain Ss046).